Consider the following 177-residue polypeptide: Alpha-crystallin B chain (177 aa).

An N-acetylmethionine modification is found at M1. Residues 58-166 (RMPSWAQTGL…PERSVPISRD (109 aa)) form the sHSP domain. H85, H106, E108, H113, and H121 together coordinate Zn(2+). Basic and acidic residues predominate over residues 155-169 (DVPERSVPISRDEKP). A disordered region spans residues 155–177 (DVPERSVPISRDEKPAVAGPQQK).

It belongs to the small heat shock protein (HSP20) family. As to quaternary structure, heteromer composed of three CRYAA and one CRYAB subunits. Aggregates with homologous proteins, including the small heat shock protein HSPB1, to form large heteromeric complexes. Inter-subunit bridging via zinc ions enhances stability, which is crucial as there is no protein turn over in the lens. Interacts with HSPBAP1 and TTN/titin.

Functionally, may contribute to the transparency and refractive index of the lens. This is Alpha-crystallin B chain (CRYAB) from Squalus acanthias (Spiny dogfish).